We begin with the raw amino-acid sequence, 230 residues long: Chalcone--flavanone isomerase (230 aa).

Substrate contacts are provided by threonine 52, asparagine 117, and serine 194.

The protein belongs to the chalcone isomerase family.

It carries out the reaction a chalcone = a flavanone.. It functions in the pathway secondary metabolite biosynthesis; flavonoid biosynthesis. Functionally, catalyzes the intramolecular cyclization of bicyclic chalcones into tricyclic (S)-flavanones. Responsible for the isomerization of 4,2',4',6'-tetrahydroxychalcone (also termed chalcone) into naringenin. The protein is Chalcone--flavanone isomerase (CHI) of Camellia sinensis (Tea plant).